The following is a 279-amino-acid chain: HTH-type transcriptional activator RhaS (279 aa).

Residues Gln-175–Gln-273 form the HTH araC/xylS-type domain. 2 DNA-binding regions (H-T-H motif) span residues Gly-192 to Thr-213 and Ile-240 to Phe-263.

In terms of assembly, binds DNA as a dimer.

It is found in the cytoplasm. Activates expression of the rhaBAD and rhaT operons. In Pectobacterium atrosepticum (strain SCRI 1043 / ATCC BAA-672) (Erwinia carotovora subsp. atroseptica), this protein is HTH-type transcriptional activator RhaS.